Here is a 132-residue protein sequence, read N- to C-terminus: Fluoride-specific ion channel FluC 2 (132 aa).

Transmembrane regions (helical) follow at residues 5-25 (VAVF…NLLG), 34-54 (TFIE…FFAA), 59-79 (PLVQ…MSAF), and 95-115 (VLYL…GIVI). Residues glycine 71 and threonine 74 each coordinate Na(+).

Belongs to the fluoride channel Fluc/FEX (TC 1.A.43) family.

The protein resides in the cell membrane. The catalysed reaction is fluoride(in) = fluoride(out). With respect to regulation, na(+) is not transported, but it plays an essential structural role and its presence is essential for fluoride channel function. Fluoride-specific ion channel. Important for reducing fluoride concentration in the cell, thus reducing its toxicity. This is Fluoride-specific ion channel FluC 2 from Bacillus licheniformis (strain ATCC 14580 / DSM 13 / JCM 2505 / CCUG 7422 / NBRC 12200 / NCIMB 9375 / NCTC 10341 / NRRL NRS-1264 / Gibson 46).